The sequence spans 556 residues: Urocanate hydratase (556 aa).

NAD(+) contacts are provided by residues 52 to 53 (GG), Gln-130, 176 to 178 (GMG), Glu-196, Arg-201, 242 to 243 (NA), 263 to 267 (QTSAH), 273 to 274 (YL), and Tyr-322. Residue Cys-410 is part of the active site. Gly-492 provides a ligand contact to NAD(+).

It belongs to the urocanase family. It depends on NAD(+) as a cofactor.

The protein localises to the cytoplasm. It carries out the reaction 4-imidazolone-5-propanoate = trans-urocanate + H2O. The protein operates within amino-acid degradation; L-histidine degradation into L-glutamate; N-formimidoyl-L-glutamate from L-histidine: step 2/3. Functionally, catalyzes the conversion of urocanate to 4-imidazolone-5-propionate. This is Urocanate hydratase from Shewanella frigidimarina (strain NCIMB 400).